The following is a 144-amino-acid chain: MPPKKKKLAGLIKLQIQAGQANPAPPVGPALGQHGVNIMEFCKAYNAATESQRGNVVPVEISVYEDRTFDFKLKTPPAAKLLLKAAGVAKGSGEPHKTKVASVTMDQVREIAKTKAEDLNANDIEQAAKIIAGTARSMGITVQG.

It belongs to the universal ribosomal protein uL11 family. As to quaternary structure, part of the ribosomal stalk of the 50S ribosomal subunit. Interacts with L10 and the large rRNA to form the base of the stalk. L10 forms an elongated spine to which L12 dimers bind in a sequential fashion forming a multimeric L10(L12)X complex. In terms of processing, one or more lysine residues are methylated.

Forms part of the ribosomal stalk which helps the ribosome interact with GTP-bound translation factors. This is Large ribosomal subunit protein uL11 from Rhodococcus erythropolis (strain PR4 / NBRC 100887).